The chain runs to 949 residues: MSDNKPSEGDNKLQLKAPRRIVLKKTVEGSSIKQNFAHGRSKSVAVEVRRKKTFLKPGSKEGGFLIDQEKPEEIEEKKEAPKSPKRGEERHILRPLTPEEIEAKQKELEAKRQAEEEAARQKAEQEAARQKQEAEAARRKAEQEAARQKQEAEAARRKAEEEAARAAAAAPAAPVAAPAEAAPAVPVAVAEPVVVAQPAPEAPAPVVEEEMVEAKPLPAAAPAAPSAPVRLLHQPVEEEPKRKLSKAQREEMARRKTEDLVSKRLNQLEELREQKRKEDARKEAEVALAKKEKPVVAATAAAAAEVVAGRTPREDSAGEPFSAGRRKNKKYQDNEDRLQQPRGKSRRRKPFKSEMQAPAPVYREVTIPETITVGELANRMAVKSSEVIKLLFAQGMLVTINQTLDQDTAVLVVEEMGHKPKSVSESAAIEAELDAGEDAAEDMETRPPVITVMGHVDHGKTSLLDAIRSTDVTSREHGGITQHIGAYQVTLASGDKITFLDTPGHSAFTAMRARGAQVTDIVVLVVAADDGVMPQTVEAINHAKSAKVPIVVAVNKIDKPGSNPDRVMQQLSDHGLVPEAWGGDTIFVHVSAKSGEGISTLEEMLLLQAEMLNLQSNPTKKRARGTIIEANLDRGRGAVATCLVQNGTLRVGDICVVGNEWCRVRALNDDRGNQVSEASPSMPVEIIGLSGVPQAGDDLVAVNDERRAREIAQFRQQKDKEAIQAKQQPATRLEDMFEHIEQGEVEELNVVLKADVQGSVEAVAEALRKIKHEQIEVRVIHTGVGGINESDVMLAVASGAITVGFNVRADAKARDLAKREQIDLRFYNVIYDLVDDISLALEGRLAPTVREKVLGHAQVREVFRITKIGNVCGCLVTDGIIQRNGKLRILRQNVVVYEGPVSALKRFKDDVKEVREGFECGISIEKFNDVKVDDVLECYVEEQVKQTLS.

Disordered stretches follow at residues 54–183, 217–288, and 305–357; these read FLKP…EAAP, LPAA…EVAL, and EVVA…EMQA. Basic and acidic residues-rich tracts occupy residues 67–92 and 101–164; these read DQEK…ERHI and IEAK…EEAA. Low complexity-rich tracts occupy residues 165-183 and 217-228; these read RAAA…EAAP and LPAAAPAAPSAP. Basic and acidic residues-rich tracts occupy residues 235–288 and 330–339; these read PVEE…EVAL and KYQDNEDRLQ. The tr-type G domain maps to 445 to 619; that stretch reads TRPPVITVMG…EMLNLQSNPT (175 aa). The tract at residues 454–461 is G1; sequence GHVDHGKT. Residue 454–461 participates in GTP binding; the sequence is GHVDHGKT. The tract at residues 479–483 is G2; sequence GITQH. The tract at residues 501–504 is G3; that stretch reads DTPG. GTP contacts are provided by residues 501-505 and 555-558; these read DTPGH and NKID. The interval 555–558 is G4; the sequence is NKID. A G5 region spans residues 591–593; that stretch reads SAK.

It belongs to the TRAFAC class translation factor GTPase superfamily. Classic translation factor GTPase family. IF-2 subfamily.

The protein resides in the cytoplasm. Functionally, one of the essential components for the initiation of protein synthesis. Protects formylmethionyl-tRNA from spontaneous hydrolysis and promotes its binding to the 30S ribosomal subunits. Also involved in the hydrolysis of GTP during the formation of the 70S ribosomal complex. The sequence is that of Translation initiation factor IF-2 from Magnetococcus marinus (strain ATCC BAA-1437 / JCM 17883 / MC-1).